The primary structure comprises 1358 residues: Xanthine dehydrogenase/oxidase (1358 aa).

A 2Fe-2S ferredoxin-type domain is found at 8–95 (DELVFFVNGK…HVAVTTVEGI (88 aa)). [2Fe-2S] cluster contacts are provided by C47, C52, C55, C77, C117, C120, C152, and C154. Residues 255–440 (FKGERVMWIQ…LSVEIPYSKE (186 aa)) enclose the FAD-binding PCMH-type domain. FAD is bound by residues 283 to 290 (LVVGNTEV), F363, 373 to 377 (ALGGN), D386, L430, and K448. The Mo-molybdopterin site is built by Q796 and F827. Residues E831 and R909 each coordinate substrate. Position 941 (R941) interacts with Mo-molybdopterin. Substrate-binding residues include F943 and T1039. A1108 contributes to the Mo-molybdopterin binding site. E1290 (proton acceptor) is an active-site residue.

The protein belongs to the xanthine dehydrogenase family. In terms of assembly, homodimer. FAD is required as a cofactor. Requires Mo-molybdopterin as cofactor. [2Fe-2S] cluster serves as cofactor. Detected in liver (at protein level).

It is found in the peroxisome. Its subcellular location is the cytoplasm. The enzyme catalyses xanthine + NAD(+) + H2O = urate + NADH + H(+). It catalyses the reaction hypoxanthine + NAD(+) + H2O = xanthine + NADH + H(+). It carries out the reaction xanthine + O2 + H2O = urate + H2O2. Key enzyme in purine degradation. Catalyzes the oxidation of hypoxanthine to xanthine. Catalyzes the oxidation of xanthine to uric acid. Contributes to the generation of reactive oxygen species. This Gallus gallus (Chicken) protein is Xanthine dehydrogenase/oxidase (XDH).